The chain runs to 435 residues: Eukaryotic translation initiation factor 3 subunit E (435 aa).

A PCI domain is found at 219 to 392; sequence FFNHPKGRDL…GHVVMGTQPL (174 aa).

This sequence belongs to the eIF-3 subunit E family. In terms of assembly, component of the eukaryotic translation initiation factor 3 (eIF-3) complex. The eIF-3 complex interacts with pix. Interacts with mxt.

It localises to the cytoplasm. In terms of biological role, component of the eukaryotic translation initiation factor 3 (eIF-3) complex, which is involved in protein synthesis of a specialized repertoire of mRNAs and, together with other initiation factors, stimulates binding of mRNA and methionyl-tRNAi to the 40S ribosome. The eIF-3 complex specifically targets and initiates translation of a subset of mRNAs involved in cell proliferation. The protein is Eukaryotic translation initiation factor 3 subunit E (eIF3-S6) of Drosophila erecta (Fruit fly).